We begin with the raw amino-acid sequence, 150 residues long: 3-hydroxyacyl-[acyl-carrier-protein] dehydratase FabZ (150 aa).

Residue His-54 is part of the active site.

The protein belongs to the thioester dehydratase family. FabZ subfamily.

The protein localises to the cytoplasm. The enzyme catalyses a (3R)-hydroxyacyl-[ACP] = a (2E)-enoyl-[ACP] + H2O. In terms of biological role, involved in unsaturated fatty acids biosynthesis. Catalyzes the dehydration of short chain beta-hydroxyacyl-ACPs and long chain saturated and unsaturated beta-hydroxyacyl-ACPs. The sequence is that of 3-hydroxyacyl-[acyl-carrier-protein] dehydratase FabZ from Colwellia psychrerythraea (strain 34H / ATCC BAA-681) (Vibrio psychroerythus).